A 637-amino-acid polypeptide reads, in one-letter code: tRNA uridine 5-carboxymethylaminomethyl modification enzyme MnmG (637 aa).

Position 18–23 (18–23) interacts with FAD; it reads GAGHAG. 281–295 serves as a coordination point for NAD(+); the sequence is GPRYCPSIEDKIVRF.

It belongs to the MnmG family. In terms of assembly, homodimer. Heterotetramer of two MnmE and two MnmG subunits. The cofactor is FAD.

The protein resides in the cytoplasm. NAD-binding protein involved in the addition of a carboxymethylaminomethyl (cmnm) group at the wobble position (U34) of certain tRNAs, forming tRNA-cmnm(5)s(2)U34. The chain is tRNA uridine 5-carboxymethylaminomethyl modification enzyme MnmG from Ligilactobacillus salivarius (strain UCC118) (Lactobacillus salivarius).